The primary structure comprises 209 residues: Large ribosomal subunit protein uL4 (209 aa).

The tract at residues 50–78 is disordered; the sequence is STLKKGEVSGGGKKPYQQKHTGRARQGSI.

Belongs to the universal ribosomal protein uL4 family. Part of the 50S ribosomal subunit.

Its function is as follows. One of the primary rRNA binding proteins, this protein initially binds near the 5'-end of the 23S rRNA. It is important during the early stages of 50S assembly. It makes multiple contacts with different domains of the 23S rRNA in the assembled 50S subunit and ribosome. Forms part of the polypeptide exit tunnel. This Mycoplasmoides gallisepticum (strain R(low / passage 15 / clone 2)) (Mycoplasma gallisepticum) protein is Large ribosomal subunit protein uL4.